Reading from the N-terminus, the 272-residue chain is Shikimate dehydrogenase (NADP(+)) (272 aa).

Residues 14 to 16 (SKS) and Thr-61 each bind shikimate. Lys-65 (proton acceptor) is an active-site residue. Glu-77 contacts NADP(+). Residues Asn-86 and Asp-102 each coordinate shikimate. Residues 126 to 130 (GAGGA), 149 to 154 (NRTASR), and Met-213 contribute to the NADP(+) site. Tyr-215 is a shikimate binding site. Gly-237 serves as a coordination point for NADP(+).

It belongs to the shikimate dehydrogenase family. In terms of assembly, homodimer.

It catalyses the reaction shikimate + NADP(+) = 3-dehydroshikimate + NADPH + H(+). The protein operates within metabolic intermediate biosynthesis; chorismate biosynthesis; chorismate from D-erythrose 4-phosphate and phosphoenolpyruvate: step 4/7. Functionally, involved in the biosynthesis of the chorismate, which leads to the biosynthesis of aromatic amino acids. Catalyzes the reversible NADPH linked reduction of 3-dehydroshikimate (DHSA) to yield shikimate (SA). The protein is Shikimate dehydrogenase (NADP(+)) of Salmonella heidelberg (strain SL476).